A 226-amino-acid chain; its full sequence is Ribonuclease 3 (226 aa).

Residues 7–129 enclose the RNase III domain; sequence LPRLCRTLGY…IIGAVYLDAD (123 aa). Position 42 (E42) interacts with Mg(2+). D46 is an active-site residue. Mg(2+) is bound by residues D115 and E118. The active site involves E118. In terms of domain architecture, DRBM spans 156–226; the sequence is DPKTILQEYL…AAQVLELLNK (71 aa).

This sequence belongs to the ribonuclease III family. In terms of assembly, homodimer. It depends on Mg(2+) as a cofactor.

The protein resides in the cytoplasm. The catalysed reaction is Endonucleolytic cleavage to 5'-phosphomonoester.. Functionally, digests double-stranded RNA. Involved in the processing of primary rRNA transcript to yield the immediate precursors to the large and small rRNAs (23S and 16S). Processes some mRNAs, and tRNAs when they are encoded in the rRNA operon. Processes pre-crRNA and tracrRNA of type II CRISPR loci if present in the organism. This chain is Ribonuclease 3, found in Shewanella frigidimarina (strain NCIMB 400).